The sequence spans 236 residues: 4-aminobenzoate synthase (236 aa).

Fe(2+) is bound by residues Glu-87, His-94, Glu-148, His-180, Asp-184, and His-187.

It belongs to the CADD family. In terms of assembly, homodimer. Fe(2+) is required as a cofactor. It depends on Mn(2+) as a cofactor.

In terms of biological role, involved in de novo para-aminobenzoate (PABA) biosynthesis. Acts as a self-sacrificing or 'suicide' enzyme that utilizes its own active site tyrosine residue(s) as the substrate for PABA synthesis. The side chain of the tyrosine residue is released from the protein backbone via cleavage of the C(alpha)-C(beta) bond, leaving a glycine in place of the original tyrosine residue. Reaction requires O(2) and a reduced dimetal cofactor. The sequence is that of 4-aminobenzoate synthase from Chlamydia muridarum (strain MoPn / Nigg).